A 458-amino-acid polypeptide reads, in one-letter code: uncharacterized protein (458 aa).

A compositionally biased stretch (basic and acidic residues) spans 1–10 (MQAEPKKSQA). The segment at 1 to 20 (MQAEPKKSQAEQRAVAEPVS) is disordered. Residues 23-84 (VSLVGEEYEV…ARFLRADAVE (62 aa)) form the TRAM domain. Residues C97, C105, C108, and C193 each coordinate [4Fe-4S] cluster. Residues Q287, Y316, E340, and D384 each coordinate S-adenosyl-L-methionine. Residue C411 is the Nucleophile of the active site.

The protein belongs to the class I-like SAM-binding methyltransferase superfamily. RNA M5U methyltransferase family.

This is an uncharacterized protein from Streptomyces coelicolor (strain ATCC BAA-471 / A3(2) / M145).